Consider the following 747-residue polypeptide: Sex-specific storage-protein 1 (747 aa).

The signal sequence occupies residues Met-1 to Ala-15. N-linked (GlcNAc...) asparagine glycosylation is found at Asn-494 and Asn-706.

The protein belongs to the hemocyanin family. In terms of tissue distribution, fat body.

Its subcellular location is the secreted. The protein resides in the extracellular space. Its function is as follows. Larval storage protein (LSP) which may serve as a store of amino acids for synthesis of adult proteins. The sequence is that of Sex-specific storage-protein 1 (SP1) from Bombyx mori (Silk moth).